Consider the following 511-residue polypeptide: Putative thymidine phosphorylase (511 aa).

The protein belongs to the thymidine/pyrimidine-nucleoside phosphorylase family. Type 2 subfamily.

It carries out the reaction thymidine + phosphate = 2-deoxy-alpha-D-ribose 1-phosphate + thymine. The chain is Putative thymidine phosphorylase from Polaromonas sp. (strain JS666 / ATCC BAA-500).